Reading from the N-terminus, the 773-residue chain is MASFGELSFLSEISNIHKSNKKHEIQSAGTVALDNGVESPYYICVQVENQGIEVYHMKDERLFASCPLPEKTRFSCSPIYIKEGNWHYIWTCTSLKSNGEWKILLWKFNDLEEESEVVYRDISNQQIFALHFISSTGQLVIVFRNGKIAFLDPEDDKVHMSASVNESATLLQSMYVPSQANPIDAVRLASNEASGTNNNPKEIEMNSDTTSSVPKSGSTSFSANVTSSTSMVYLLYSVHVDKIIQYYVDSFSVSERRLVNTRAVVLKEVQAPSHILMSKDSTSIYTISLEGLSIYSLHDESKSYMLIKILHFQSISKIEHIELISDNFLLIQHDSQLSLWDITFGTIQDVYDLKQKPTILTFTCYKSSLKKMNQNSQLTGYIAVLLKKGLAIVPYTLPIKMLLADAVGKRTSKIGKLRGTNELIGEGVLTKSKNGPSMRDQLLKNIQLQDHSLRDELISLRSLAEQKNTIEFDAKFLGVVERYQNQYANNCKILKTSSVLPIPFAHAIESLLFSLDEENELQVSCAASGTLNYLIRHRLFSYSTLVQKGFSGSVFDCLYKFQKDIAFNFLERTSDISAYEIACAIKTAINSSKVKLLRSALARLSLFDSTTSREALLLAFVPEDFDSLFKTLGNLVVDSNLASVKFNLETYIYCLSVVLDAMGVGGVASSSENLEAARILYNDLQEKLTNLTAMSLVLPAISEIVKRKKDVHAERVQFYANPQPKAIVDDMGDLATLLKKDFLSEKRKGKSQRARGKEIDMAIGKYTVERLEI.

The tract at residues 192–219 is disordered; sequence EASGTNNNPKEIEMNSDTTSSVPKSGST.

The protein localises to the cytoplasm. This is an uncharacterized protein from Schizosaccharomyces pombe (strain 972 / ATCC 24843) (Fission yeast).